The primary structure comprises 469 residues: Chromosomal replication initiator protein DnaA (469 aa).

Residues 1-83 (MSEWDYKIFW…KKISIDFIIK (83 aa)) are domain I, interacts with DnaA modulators. Residues 83–128 (KPNTSEDLSKAENEGGNDKKEDAAKPSSAESKKKSVKTEGGRGQHP) are domain II. A disordered region spans residues 89–131 (DLSKAENEGGNDKKEDAAKPSSAESKKKSVKTEGGRGQHPDLR). Residues 129–344 (DLRPEYNFED…AALTKLIAYT (216 aa)) form a domain III, AAA+ region region. The ATP site is built by Gly173, Gly175, Lys176, and Thr177. Residues 345 to 469 (ELTKKTMDEA…RNTIKENTNK (125 aa)) form a domain IV, binds dsDNA region.

The protein belongs to the DnaA family. In terms of assembly, oligomerizes as a right-handed, spiral filament on DNA at oriC.

The protein resides in the cytoplasm. Its function is as follows. Plays an essential role in the initiation and regulation of chromosomal replication. ATP-DnaA binds to the origin of replication (oriC) to initiate formation of the DNA replication initiation complex once per cell cycle. Binds the DnaA box (a 9 base pair repeat at the origin) and separates the double-stranded (ds)DNA. Forms a right-handed helical filament on oriC DNA; dsDNA binds to the exterior of the filament while single-stranded (ss)DNA is stabiized in the filament's interior. The ATP-DnaA-oriC complex binds and stabilizes one strand of the AT-rich DNA unwinding element (DUE), permitting loading of DNA polymerase. After initiation quickly degrades to an ADP-DnaA complex that is not apt for DNA replication. Binds acidic phospholipids. The chain is Chromosomal replication initiator protein DnaA from Treponema denticola (strain ATCC 35405 / DSM 14222 / CIP 103919 / JCM 8153 / KCTC 15104).